A 473-amino-acid chain; its full sequence is Trehalose-6-phosphate synthase (473 aa).

R10 contributes to the D-glucose 6-phosphate binding site. G21 to G22 contacts UDP-alpha-D-glucose. D-glucose 6-phosphate contacts are provided by Y76 and D130. UDP-alpha-D-glucose-binding residues include R262 and K267. R300 provides a ligand contact to D-glucose 6-phosphate. Residues F339 and L365 to E369 contribute to the UDP-alpha-D-glucose site.

It belongs to the glycosyltransferase 20 family. In terms of assembly, homotetramer.

The enzyme catalyses D-glucose 6-phosphate + UDP-alpha-D-glucose = alpha,alpha-trehalose 6-phosphate + UDP + H(+). It functions in the pathway glycan biosynthesis; trehalose biosynthesis. Functionally, probably involved in the osmoprotection via the biosynthesis of trehalose. Catalyzes the transfer of glucose from UDP-alpha-D-glucose (UDP-Glc) to D-glucose 6-phosphate (Glc-6-P) to form trehalose-6-phosphate. Acts with retention of the anomeric configuration of the UDP-sugar donor. This chain is Trehalose-6-phosphate synthase (otsA), found in Salmonella arizonae (strain ATCC BAA-731 / CDC346-86 / RSK2980).